The chain runs to 847 residues: Glycogen phosphorylase, liver form (847 aa).

An N-acetylalanine modification is found at Ala-2. At Ser-15 the chain carries Phosphoserine; by PHK; in form phosphorylase a. Residues 43-45, Tyr-76, and Arg-310 each bind AMP; that span reads DRN. Lys-364 carries the post-translational modification N6-succinyllysine. The residue at position 470 (Lys-470) is an N6-acetyllysine. 3 positions are modified to phosphoserine: Ser-524, Ser-561, and Ser-639. Lys-681 carries the post-translational modification N6-(pyridoxal phosphate)lysine. Lys-796 bears the N6-acetyllysine mark.

The protein belongs to the glycogen phosphorylase family. Homodimer; enzymatically active. Interacts with PPP1R3B; recruits the phosphatase PP1 which dephosphorylates and inactivates PYGL/glycogen phosphorylase. Requires pyridoxal 5'-phosphate as cofactor. In terms of processing, acetylation, which is up-regulated by glucose and insulin and down-regulated by glucagon, inhibits the glycogen phosphorylase activity by promoting PPP1R3B-mediated recruitment of phosphatase PP1 and Ser-15 dephosphorylation. Phosphorylation at Ser-15 converts inactive phosphorylase b into active phosphorylase a. Dephosphorylation of Ser-15 by phosphatase PP1 inactivates the enzyme.

It is found in the cytoplasm. Its subcellular location is the cytosol. The enzyme catalyses [(1-&gt;4)-alpha-D-glucosyl](n) + phosphate = [(1-&gt;4)-alpha-D-glucosyl](n-1) + alpha-D-glucose 1-phosphate. Its activity is regulated as follows. Allosterically regulated through the non-covalent binding of metabolites, being activated by AMP and inhibited by ATP, ADP, and glucose-6-phosphate. The activity is also controlled by post-translational modifications including phosphorylation and acetylation. Allosteric enzyme that catalyzes the rate-limiting step in glycogen catabolism, the phosphorolytic cleavage of glycogen to produce glucose-1-phosphate, and plays a central role in maintaining cellular and organismal glucose homeostasis. This Homo sapiens (Human) protein is Glycogen phosphorylase, liver form.